The chain runs to 64 residues: Large ribosomal subunit protein uL29 (64 aa).

Belongs to the universal ribosomal protein uL29 family.

This Psychrobacter sp. (strain PRwf-1) protein is Large ribosomal subunit protein uL29.